The sequence spans 492 residues: N-succinylglutamate 5-semialdehyde dehydrogenase (492 aa).

220–225 (GRANTG) contacts NAD(+). Active-site residues include E243 and C277.

It belongs to the aldehyde dehydrogenase family. AstD subfamily.

It catalyses the reaction N-succinyl-L-glutamate 5-semialdehyde + NAD(+) + H2O = N-succinyl-L-glutamate + NADH + 2 H(+). Its pathway is amino-acid degradation; L-arginine degradation via AST pathway; L-glutamate and succinate from L-arginine: step 4/5. Functionally, catalyzes the NAD-dependent reduction of succinylglutamate semialdehyde into succinylglutamate. The chain is N-succinylglutamate 5-semialdehyde dehydrogenase from Shigella boydii serotype 18 (strain CDC 3083-94 / BS512).